The primary structure comprises 234 residues: Small ribosomal subunit protein eS4 (234 aa).

In terms of domain architecture, S4 RNA-binding; degenerate spans 38–99 (IPLLIALRDY…GNDYLVSYDR (62 aa)).

It belongs to the eukaryotic ribosomal protein eS4 family.

The protein is Small ribosomal subunit protein eS4 (rps4e) of Picrophilus torridus (strain ATCC 700027 / DSM 9790 / JCM 10055 / NBRC 100828 / KAW 2/3).